The chain runs to 396 residues: Queuine tRNA-ribosyltransferase catalytic subunit 1 (396 aa).

The active-site Proton acceptor is aspartate 99. Queuine-binding positions include 99 to 103, aspartate 153, glutamine 196, and glycine 223; that span reads DSGGF. The segment at 254–260 is RNA binding; that stretch reads GVGYATD. Aspartate 273 (nucleophile) is an active-site residue. The interval 278–282 is RNA binding; important for wobble base 34 recognition; the sequence is TRTAR. 4 residues coordinate Zn(2+): cysteine 311, cysteine 313, cysteine 316, and histidine 341.

This sequence belongs to the queuine tRNA-ribosyltransferase family. Heterodimer of a catalytic subunit qtrt1 and an accessory subunit qtrt2. Requires Zn(2+) as cofactor.

The protein localises to the cytoplasm. It localises to the mitochondrion outer membrane. It carries out the reaction guanosine(34) in tRNA + queuine = queuosine(34) in tRNA + guanine. In terms of biological role, catalytic subunit of the queuine tRNA-ribosyltransferase (TGT) that catalyzes the base-exchange of a guanine (G) residue with queuine (Q) at position 34 (anticodon wobble position) in tRNAs with GU(N) anticodons (tRNA-Asp, -Asn, -His and -Tyr), resulting in the hypermodified nucleoside queuosine (7-(((4,5-cis-dihydroxy-2-cyclopenten-1-yl)amino)methyl)-7-deazaguanosine). Catalysis occurs through a double-displacement mechanism. The nucleophile active site attacks the C1' of nucleotide 34 to detach the guanine base from the RNA, forming a covalent enzyme-RNA intermediate. The proton acceptor active site deprotonates the incoming queuine, allowing a nucleophilic attack on the C1' of the ribose to form the product. This Xenopus laevis (African clawed frog) protein is Queuine tRNA-ribosyltransferase catalytic subunit 1.